A 205-amino-acid polypeptide reads, in one-letter code: 7-methyl-GTP pyrophosphatase (205 aa).

The Proton acceptor role is filled by Asp79.

The protein belongs to the Maf family. YceF subfamily. Requires a divalent metal cation as cofactor.

Its subcellular location is the cytoplasm. The catalysed reaction is N(7)-methyl-GTP + H2O = N(7)-methyl-GMP + diphosphate + H(+). Functionally, nucleoside triphosphate pyrophosphatase that hydrolyzes 7-methyl-GTP (m(7)GTP). May have a dual role in cell division arrest and in preventing the incorporation of modified nucleotides into cellular nucleic acids. In Paraburkholderia xenovorans (strain LB400), this protein is 7-methyl-GTP pyrophosphatase.